Consider the following 770-residue polypeptide: Pyrophosphate-energized vacuolar membrane proton pump 1 (770 aa).

The Intravacuolar portion of the chain corresponds to 1 to 9 (MVAPALLPE). The chain crosses the membrane as a helical span at residues 10-36 (LWTEILVPICAVIGIAFSLFQWYVVSR). Over 37 to 88 (VKLTSDLGASSSGGANNGKNGYGDYLIEEEEGVNDQSVVAKCAEIQTAISEG) the chain is Cytoplasmic. A helical membrane pass occupies residues 89-118 (ATSFLFTEYKYVGVFMIFFAAVIFVFLGSV). The Intravacuolar portion of the chain corresponds to 119–139 (EGFSTDNKPCTYDTTRTCKPA). C128 and C136 are joined by a disulfide. Residues 140 to 167 (LATAAFSTIAFVLGAVTSVLSGFLGMKI) traverse the membrane as a helical segment. The Cytoplasmic segment spans residues 168–190 (ATYANARTTLEARKGVGKAFIVA). The chain crosses the membrane as a helical span at residues 191 to 220 (FRSGAVMGFLLAASGLLVLYITINVFKIYY). Residues 221 to 223 (GDD) are Intravacuolar-facing. Residues 224–252 (WEGLFEAITGYGLGGSSMALFGRVGGGIY) form a helical membrane-spanning segment. Topologically, residues 253 to 290 (TKAADVGADLVGKIERNIPEDDPRNPAVIADNVGDNVG) are cytoplasmic. K254 is a substrate binding site. Mg(2+) is bound by residues D257, D261, and D287. A helical transmembrane segment spans residues 291–316 (DIAGMGSDLFGSYAEASCAALVVASI). Residues 317–324 (SSFGINHD) are Intravacuolar-facing. The chain crosses the membrane as a helical span at residues 325-350 (FTAMCYPLLISSMGILVCLITTLFAT). At 351–358 (DFFEIKLV) the chain is on the cytoplasmic side. Residues 359 to 386 (KEIEPALKNQLIISTVIMTVGIAIVSWV) traverse the membrane as a helical segment. The Intravacuolar segment spans residues 387–405 (GLPTSFTIFNFGTQKVVKN). A helical transmembrane segment spans residues 406-429 (WQLFLCVCVGLWAGLIIGFVTEYY). Residues 430 to 451 (TSNAYSPVQDVADSCRTGAATN) lie on the Cytoplasmic side of the membrane. A helical membrane pass occupies residues 452–476 (VIFGLALGYKSVIIPIFAIAISIFV). Topologically, residues 477 to 482 (SFSFAA) are intravacuolar. The helical transmembrane segment at 483–509 (MYGVAVAALGMLSTIATGLAIDAYGPI) threads the bilayer. Over 510–538 (SDNAGGIAEMAGMSHRIRERTDALDAAGN) the chain is Cytoplasmic. Mg(2+) contacts are provided by D511 and N538. A helical transmembrane segment spans residues 539 to 567 (TTAAIGKGFAIGSAALVSLALFGAFVSRA). Topologically, residues 568 to 577 (GIHTVDVLTP) are intravacuolar. The helical transmembrane segment at 578-606 (KVIIGLLVGAMLPYWFSAMTMKSVGSAAL) threads the bilayer. The Cytoplasmic segment spans residues 607 to 635 (KMVEEVRRQFNTIPGLMEGTAKPDYATCV). Residues 636–664 (KISTDASIKEMIPPGCLVMLTPLIVGFFF) form a helical membrane-spanning segment. Residue G665 is a topological domain, intravacuolar. A helical transmembrane segment spans residues 666–693 (VETLSGVLAGSLVSGVQIAISASNTGGA). Over 694-736 (WDNAKKYIEAGVSEHAKSLGPKGSEPHKAAVIGDTIGDPLKDT) the chain is Cytoplasmic. Mg(2+) contacts are provided by D695 and D731. Position 734 (K734) interacts with substrate. Residues 737–762 (SGPSLNILIKLMAVESLVFAPFFATH) traverse the membrane as a helical segment. Over 763 to 770 (GGILFKYF) the chain is Intravacuolar.

The protein belongs to the H(+)-translocating pyrophosphatase (TC 3.A.10) family. K(+)-stimulated subfamily. Monomer. In terms of tissue distribution, ubiquitous (at protein level). Mostly expressed in vascular tissues, meristems and root pericycle.

The protein localises to the vacuole membrane. It is found in the endosome membrane. It localises to the cell membrane. The enzyme catalyses diphosphate + H2O + H(+)(in) = 2 phosphate + 2 H(+)(out). Activated by K(+) and Mg(2+). Inhibited by Ca(2+), N,N'-dicyclohexylcarbodiimide (DCCD), N-ethylmaleimide (NEM) and aminomethylenediphosphonate (AMDP), and, to a lower extent, by fluoride (KF). Contributes to the transtonoplast (from cytosol to vacuole lumen) H(+)-electrochemical potential difference. It establishes a proton gradient of similar and often greater magnitude than the H(+)-ATPase on the same membrane. In addition, facilitates auxin transport by modulating apoplastic pH and regulates auxin-mediated developmental processes. Confers tolerance to NaCl and to drought by increasing ion retention. The chain is Pyrophosphate-energized vacuolar membrane proton pump 1 (AVP1) from Arabidopsis thaliana (Mouse-ear cress).